Consider the following 340-residue polypeptide: Annexin A2-A (340 aa).

Residues 2-25 (ALIHEILGKLSLEGNQSCARQSAL) form a P10 binding site region. 4 Annexin repeats span residues 34 to 105 (FDAE…GLIK), 106 to 177 (TRPQ…ALAK), 190 to 262 (EKID…NLVQ), and 266 to 337 (NKPL…NLCG).

Belongs to the annexin family. In terms of assembly, tetramer of 2 light chains (p10 proteins) and 2 heavy chains (p36 proteins).

Its subcellular location is the secreted. It is found in the extracellular space. It localises to the extracellular matrix. The protein resides in the basement membrane. Calcium-regulated membrane-binding protein whose affinity for calcium is greatly enhanced by anionic phospholipids. It binds two calcium ions with high affinity. This chain is Annexin A2-A (anxa2-a), found in Xenopus laevis (African clawed frog).